The chain runs to 434 residues: GPI mannosyltransferase 2 (434 aa).

A run of 10 helical transmembrane segments spans residues 22–42 (LSLAFWLWKAFVFLIIIGCPG), 109–129 (ILSFLTSVALSHIAHYFSVLA), 145–165 (GALISFLSATLHIICPAGAFL), 170–190 (GESLFSFLNITGYFLYSSSLL), 210–230 (LFSIATAVRSNGILSGALFAF), 252–272 (LGVIVVGGCVIALGLIVPQWI), 311–331 (YWTLSNLPLFILAFPMLFLMC), 354–374 (LAAPNGLLAVMAFTSYHVQII), 377–397 (ISSGYPLWYWYIICQLSSHVA), and 411–431 (IAIQGMVIYAIVQAVLFGSFL).

Belongs to the PIGV family.

It is found in the endoplasmic reticulum membrane. The protein operates within glycolipid biosynthesis; glycosylphosphatidylinositol-anchor biosynthesis. Functionally, mannosyltransferase involved in glycosylphosphatidylinositol-anchor biosynthesis. Transfers the second mannose to the glycosylphosphatidylinositol during GPI precursor assembly. This Aspergillus oryzae (strain ATCC 42149 / RIB 40) (Yellow koji mold) protein is GPI mannosyltransferase 2 (gpi18).